The primary structure comprises 188 residues: Small ribosomal subunit protein uS7 (188 aa).

It belongs to the universal ribosomal protein uS7 family. Part of the 30S ribosomal subunit.

Functionally, one of the primary rRNA binding proteins, it binds directly to 16S rRNA where it nucleates assembly of the head domain of the 30S subunit. Is located at the subunit interface close to the decoding center. The sequence is that of Small ribosomal subunit protein uS7 from Methanococcus maripaludis (strain C6 / ATCC BAA-1332).